We begin with the raw amino-acid sequence, 33 residues long: Dermaseptin-J7 (33 aa).

Val33 is modified (valine amide).

As to expression, expressed by the skin glands.

It localises to the secreted. Its function is as follows. Has antimicrobial activity. The polypeptide is Dermaseptin-J7 (Phasmahyla jandaia (Jandaia leaf frog)).